Consider the following 288-residue polypeptide: Cytochrome b-c1 complex catalytic subunit, mitochondrial (288 aa).

The helical transmembrane segment at 12-34 threads the bilayer; sequence SMVQKFIAGGVGVTGLTASYLLY. A Cytochrome c domain is found at 69–222; the sequence is ASIRRGFQVY…DLVEYEDGTP (154 aa). C82, C85, and H86 together coordinate heme c. Acidic residues predominate over residues 111–121; that stretch reads EELEYDDEPDD. Residues 111–138 form a disordered region; that stretch reads EELEYDDEPDDEGKPRKRPGKLADYIPG. A helical membrane pass occupies residues 250 to 268; it reads WGLKALVVLSSLYLLSIWV.

The protein belongs to the cytochrome c family. As to quaternary structure, component of the ubiquinol-cytochrome c oxidoreductase (cytochrome b-c1 complex, complex III, CIII), a multisubunit enzyme composed of 10 subunits. The complex is composed of 3 respiratory subunits cytochrome b (COB), cytochrome c1 (CYT1) and Rieske protein (RIP1), 2 core protein subunits COR1 and QCR2, and 5 low-molecular weight protein subunits QCR6, QCR7, QCR8, QCR9 and QCR10. The complex exists as an obligatory dimer and forms supercomplexes (SCs) in the inner mitochondrial membrane with a monomer or a dimer of cytochrome c oxidase (complex IV, CIV), resulting in 2 different assemblies (supercomplexes III(2)IV and III(2)IV(2)). Requires heme c as cofactor.

The protein resides in the mitochondrion inner membrane. It catalyses the reaction a quinol + 2 Fe(III)-[cytochrome c](out) = a quinone + 2 Fe(II)-[cytochrome c](out) + 2 H(+)(out). Component of the ubiquinol-cytochrome c oxidoreductase, a multisubunit transmembrane complex that is part of the mitochondrial electron transport chain which drives oxidative phosphorylation. The complex plays an important role in the uptake of multiple carbon sources present in different host niches. The chain is Cytochrome b-c1 complex catalytic subunit, mitochondrial from Candida albicans (strain SC5314 / ATCC MYA-2876) (Yeast).